A 207-amino-acid polypeptide reads, in one-letter code: Small ribosomal subunit protein uS4 (207 aa).

The interval 31–54 is disordered; it reads KCKLDSKPGQHGRTSGARTSDYGN. Residues 42–53 are compositionally biased toward polar residues; that stretch reads GRTSGARTSDYG. In terms of domain architecture, S4 RNA-binding spans 97 to 160; sequence SRLDNVVYRM…KKQVRIAEAL (64 aa).

The protein belongs to the universal ribosomal protein uS4 family. Part of the 30S ribosomal subunit. Contacts protein S5. The interaction surface between S4 and S5 is involved in control of translational fidelity.

Functionally, one of the primary rRNA binding proteins, it binds directly to 16S rRNA where it nucleates assembly of the body of the 30S subunit. In terms of biological role, with S5 and S12 plays an important role in translational accuracy. The polypeptide is Small ribosomal subunit protein uS4 (Cupriavidus metallidurans (strain ATCC 43123 / DSM 2839 / NBRC 102507 / CH34) (Ralstonia metallidurans)).